We begin with the raw amino-acid sequence, 218 residues long: Kappa-scoloptoxin(11)-Ssd1b (218 aa).

Positions Met1–Ser16 are cleaved as a signal peptide. The propeptide occupies Ser17–Arg25.

Contains 8 disulfide bonds. As to expression, expressed by the venom gland.

The protein resides in the secreted. Functionally, voltage-gated potassium channel inhibitor. This chain is Kappa-scoloptoxin(11)-Ssd1b, found in Scolopendra dehaani (Thai centipede).